The following is a 504-amino-acid chain: D-alanine--D-alanyl carrier protein ligase (504 aa).

Position 152–153 (152–153 (TS)) interacts with ATP. Residue D197 coordinates D-alanine. Position 292–297 (292–297 (NTYGPT)) interacts with ATP. V301 provides a ligand contact to D-alanine. Residues D383, 394 to 397 (YNGR), and K492 contribute to the ATP site. K492 provides a ligand contact to D-alanine.

It belongs to the ATP-dependent AMP-binding enzyme family. DltA subfamily.

It localises to the cytoplasm. The enzyme catalyses holo-[D-alanyl-carrier protein] + D-alanine + ATP = D-alanyl-[D-alanyl-carrier protein] + AMP + diphosphate. The protein operates within cell wall biogenesis; lipoteichoic acid biosynthesis. Catalyzes the first step in the D-alanylation of lipoteichoic acid (LTA), the activation of D-alanine and its transfer onto the D-alanyl carrier protein (Dcp) DltC. In an ATP-dependent two-step reaction, forms a high energy D-alanyl-AMP intermediate, followed by transfer of the D-alanyl residue as a thiol ester to the phosphopantheinyl prosthetic group of the Dcp. D-alanylation of LTA plays an important role in modulating the properties of the cell wall in Gram-positive bacteria, influencing the net charge of the cell wall. This Bacillus cytotoxicus (strain DSM 22905 / CIP 110041 / 391-98 / NVH 391-98) protein is D-alanine--D-alanyl carrier protein ligase.